Here is a 745-residue protein sequence, read N- to C-terminus: TonB-dependent heme receptor A (745 aa).

Positions 1–24 (MNILINKRIFLLVTLVGIQLNVTA) are cleaved as a signal peptide. Residues 45–157 (DDSNKLPGRS…FAGTVKFETK (113 aa)) enclose the TBDR plug domain. One can recognise a TBDR beta-barrel domain in the interval 168–745 (KIGGFLKYGN…NIKFSLSQKF (578 aa)).

This sequence belongs to the TonB-dependent receptor family.

It is found in the cell outer membrane. Functionally, heme receptor. The protein is TonB-dependent heme receptor A (tdhA) of Haemophilus influenzae (strain 86-028NP).